Here is a 335-residue protein sequence, read N- to C-terminus: Ketol-acid reductoisomerase (NADP(+)) (335 aa).

Residues 5-185 (SKIYTDKDSN…GATRAGVIPT (181 aa)) form the KARI N-terminal Rossmann domain. NADP(+) contacts are provided by residues 28–31 (YGSQ), S56, and 86–89 (DMVQ). The active site involves H111. G137 provides a ligand contact to NADP(+). Residues 186-331 (TFKEETETDL…NQLKDLIQKG (146 aa)) form the KARI C-terminal knotted domain. Mg(2+) contacts are provided by D194, E198, E230, and E234. Residue S255 participates in substrate binding.

The protein belongs to the ketol-acid reductoisomerase family. Requires Mg(2+) as cofactor.

The enzyme catalyses (2R)-2,3-dihydroxy-3-methylbutanoate + NADP(+) = (2S)-2-acetolactate + NADPH + H(+). It catalyses the reaction (2R,3R)-2,3-dihydroxy-3-methylpentanoate + NADP(+) = (S)-2-ethyl-2-hydroxy-3-oxobutanoate + NADPH + H(+). It participates in amino-acid biosynthesis; L-isoleucine biosynthesis; L-isoleucine from 2-oxobutanoate: step 2/4. The protein operates within amino-acid biosynthesis; L-valine biosynthesis; L-valine from pyruvate: step 2/4. Its function is as follows. Involved in the biosynthesis of branched-chain amino acids (BCAA). Catalyzes an alkyl-migration followed by a ketol-acid reduction of (S)-2-acetolactate (S2AL) to yield (R)-2,3-dihydroxy-isovalerate. In the isomerase reaction, S2AL is rearranged via a Mg-dependent methyl migration to produce 3-hydroxy-3-methyl-2-ketobutyrate (HMKB). In the reductase reaction, this 2-ketoacid undergoes a metal-dependent reduction by NADPH to yield (R)-2,3-dihydroxy-isovalerate. This Saccharolobus islandicus (strain M.16.27) (Sulfolobus islandicus) protein is Ketol-acid reductoisomerase (NADP(+)).